The chain runs to 891 residues: 26S proteasome non-ATPase regulatory subunit 2 homolog A (891 aa).

Residues 1-44 form a disordered region; that stretch reads MAPTQDPNSVGGGAKKDEATLKVPSKDPKKKDEKKDEDLSEEDL. Positions 14-21 match the Nuclear localization signal motif; the sequence is AKKDEATL. A compositionally biased stretch (basic and acidic residues) spans 14–37; sequence AKKDEATLKVPSKDPKKKDEKKDE. A Glycyl lysine isopeptide (Lys-Gly) (interchain with G-Cter in ubiquitin) cross-link involves residue Lys-218. Thr-219 carries the O-acetylthreonine modification. PC repeat units lie at residues 414 to 447, 448 to 484, 485 to 519, 522 to 556, 565 to 594, 674 to 705, and 724 to 739; these read SAAA…PIIA, GALL…SVRI, GAIM…PLDV, FASL…AELG, LGLG…KIRK, LALG…EVAM, and AGML…KDMS.

The protein belongs to the proteasome subunit S2 family. As to quaternary structure, component of the 19S regulatory particle (RP/PA700) base subcomplex of the 26S proteasome. The 26S proteasome is composed of a core protease (CP), known as the 20S proteasome, capped at one or both ends by the 19S regulatory particle (RP/PA700). The RP/PA700 complex is composed of at least 17 different subunits in two subcomplexes, the base and the lid, which form the portions proximal and distal to the 20S proteolytic core, respectively. Interacts with JMJ27. As to expression, expressed in stems, leaves, buds, flowers, siliques and developing seeds.

The protein localises to the nucleus. Its subcellular location is the cytoplasm. Acts as a regulatory subunit of the 26 proteasome which is involved in the ATP-dependent degradation of ubiquitinated proteins. Required during embryogenesis. Required for optimal plant growth and stress responses. Required for innate immunity. Prevents JMJ27 accumulation in non-drought conditions. The polypeptide is 26S proteasome non-ATPase regulatory subunit 2 homolog A (Arabidopsis thaliana (Mouse-ear cress)).